Here is a 301-residue protein sequence, read N- to C-terminus: Phosphatidylglycerol--prolipoprotein diacylglyceryl transferase (301 aa).

3 consecutive transmembrane segments (helical) span residues 17–37 (LAVR…IVVG), 59–79 (MLFY…VLFY), and 97–117 (GGMS…LFAY). Arg142 contributes to the a 1,2-diacyl-sn-glycero-3-phospho-(1'-sn-glycerol) binding site. Helical transmembrane passes span 230–250 (MGAI…TVEF) and 265–285 (LSMG…LLVW).

This sequence belongs to the Lgt family.

The protein resides in the cell inner membrane. The catalysed reaction is L-cysteinyl-[prolipoprotein] + a 1,2-diacyl-sn-glycero-3-phospho-(1'-sn-glycerol) = an S-1,2-diacyl-sn-glyceryl-L-cysteinyl-[prolipoprotein] + sn-glycerol 1-phosphate + H(+). Its pathway is protein modification; lipoprotein biosynthesis (diacylglyceryl transfer). Catalyzes the transfer of the diacylglyceryl group from phosphatidylglycerol to the sulfhydryl group of the N-terminal cysteine of a prolipoprotein, the first step in the formation of mature lipoproteins. The sequence is that of Phosphatidylglycerol--prolipoprotein diacylglyceryl transferase from Paraburkholderia phytofirmans (strain DSM 17436 / LMG 22146 / PsJN) (Burkholderia phytofirmans).